The following is a 225-amino-acid chain: MQTKKLNHAPKTGYMFTVTVKNMGITEYLTAWQAMKDFTQQRTRETPDEIWLLEHPPVYTQGIAGKPEHLLFPSNIPVIKTDRGGQITYHGPGQIIMYLLLDLHRWQLGIRQLVRKMEGAVINLMDEYDIVANGSQDAPGVYVNGAKIASLGLKIRRGACYHGIAFNADMDLAPFVAINPCGYPGLRVTQAKELGISDNKEVLAGKLAQNFIAQLTHRIITPHGR.

The 176-residue stretch at 44-219 (RETPDEIWLL…NFIAQLTHRI (176 aa)) folds into the BPL/LPL catalytic domain. Substrate is bound by residues 83 to 90 (RGGQITYH), 150 to 152 (SLG), and 163 to 165 (GIA). Cys181 serves as the catalytic Acyl-thioester intermediate.

Belongs to the LipB family.

The protein localises to the cytoplasm. It catalyses the reaction octanoyl-[ACP] + L-lysyl-[protein] = N(6)-octanoyl-L-lysyl-[protein] + holo-[ACP] + H(+). Its pathway is protein modification; protein lipoylation via endogenous pathway; protein N(6)-(lipoyl)lysine from octanoyl-[acyl-carrier-protein]: step 1/2. In terms of biological role, catalyzes the transfer of endogenously produced octanoic acid from octanoyl-acyl-carrier-protein onto the lipoyl domains of lipoate-dependent enzymes. Lipoyl-ACP can also act as a substrate although octanoyl-ACP is likely to be the physiological substrate. This is Octanoyltransferase from Nitrosomonas eutropha (strain DSM 101675 / C91 / Nm57).